Here is a 354-residue protein sequence, read N- to C-terminus: D-alanine--D-alanine ligase (354 aa).

In terms of domain architecture, ATP-grasp spans 133 to 338 (KHLFAQAGLP…YSDLIEQLVE (206 aa)). ATP is bound at residue 166–221 (EKELGYPCFVKPANLGSSVGISKCRNREELEKAFELAFEYDRKIVVEEGIAGREIE). Aspartate 292, glutamate 305, and asparagine 307 together coordinate Mg(2+).

Belongs to the D-alanine--D-alanine ligase family. It depends on Mg(2+) as a cofactor. Requires Mn(2+) as cofactor.

The protein localises to the cytoplasm. It carries out the reaction 2 D-alanine + ATP = D-alanyl-D-alanine + ADP + phosphate + H(+). It functions in the pathway cell wall biogenesis; peptidoglycan biosynthesis. In terms of biological role, cell wall formation. In Bacillus velezensis (strain DSM 23117 / BGSC 10A6 / LMG 26770 / FZB42) (Bacillus amyloliquefaciens subsp. plantarum), this protein is D-alanine--D-alanine ligase.